We begin with the raw amino-acid sequence, 96 residues long: Muconolactone Delta-isomerase (96 aa).

This sequence belongs to the muconolactone Delta-isomerase family. As to quaternary structure, homodecamer.

It carries out the reaction (S)-muconolactone = (4,5-dihydro-5-oxofuran-2-yl)-acetate. The protein operates within aromatic compound metabolism; beta-ketoadipate pathway; 5-oxo-4,5-dihydro-2-furylacetate from catechol: step 3/3. This Pseudomonas aeruginosa (strain ATCC 15692 / DSM 22644 / CIP 104116 / JCM 14847 / LMG 12228 / 1C / PRS 101 / PAO1) protein is Muconolactone Delta-isomerase (catC).